The primary structure comprises 686 residues: Epsin (686 aa).

The ENTH domain occupies 14–145 (DAVLNTPEIE…QDDQRIKEER (132 aa)). Disordered regions lie at residues 177–417 (YDSD…FNNN) and 463–571 (NSSM…TMRP). Residues 185–211 (NQRDSYGGNQRDSYGGNQRDSYGGNQR) are compositionally biased toward polar residues. Basic and acidic residues predominate over residues 212-225 (ETTRRDSFNGRDEG). The span at 237–256 (SYDSDPYSNTRAEYENYSNR) shows a compositional bias: polar residues. Composition is skewed to low complexity over residues 269-340 (SNNS…SGPS) and 383-417 (NNTN…FNNN). Residues 491–503 (FDQQSGDFSNKND) are compositionally biased toward polar residues. Residues 504–521 (GQQKPKDTNDPWSKKDLF) show a composition bias toward basic and acidic residues. Positions 527–547 (GNQNPNQSPVNNTNNNNNGNT) are enriched in low complexity. A compositionally biased stretch (polar residues) spans 558–567 (PITSAGSTIP).

The protein belongs to the epsin family.

It localises to the membrane. It is found in the clathrin-coated pit. Functionally, binds to membranes enriched in phosphatidylinositol 4,5-bisphosphate (PtdIns(4,5)P2). The chain is Epsin (epnA) from Dictyostelium discoideum (Social amoeba).